The primary structure comprises 347 residues: uncharacterized protein (347 aa).

Transmembrane regions (helical) follow at residues 6-26 (GSAS…GFAT), 37-57 (FGWF…LLGA), 90-110 (FMLF…GALF), 114-134 (LGMS…IVMT), 140-160 (IFGV…IVVA), 182-202 (WLLS…AVLV), 217-237 (GALI…LSLS), 262-282 (LIYL…NLYG), 289-309 (SFLP…AYIT), and 317-337 (LIST…GALL).

Its subcellular location is the cell membrane. This is an uncharacterized protein from Bacillus subtilis (strain 168).